The sequence spans 512 residues: MSEIKEARLQKASSLVSKGFASYAQSFRVSHTTSFLIQKFDYLENGQEENFSVSLAGRVMAKRVMGKIAFFTISDQDGQIQLYLEKRIINLNLEKQKLLSFEDIKEIVDIGDWIGVYGTIKKTNKGELSIKVEKWEMLSKSLQPLPDKWHGLTDIEKRYRQRYLDLIVNPHSKNVFKTRAKCISFIRKWLDNRNFLEIETPILQSEAGGAEARPFITHHNTLDIPLYLRIATELHLKRMVVGGFEKVYELGRIFRNEGISTRHNPEFTSVEIYEAYSDYVDMMNLTEELIKDILADACGSLTINYQNKEIDFSKPWLRISMKDIVKKYTGIDFHSFNGDFLAAKKAVKNINVDFSNKVNTIGRLLNEVFEQKVESKLIEPTFVIDYPVEISPLARPHFDNKEIVQRFELFIVGRELANAFSELIDPVDQRERMQLQQSLRDKGDLEAHCIDEDFLNALEIGMPPTGGLGIGIDRLIMLITNSASIRDVIPFPLLKPEISSKKSEKLPLNEVK.

Residues Glu408 and Glu415 each coordinate Mg(2+).

Belongs to the class-II aminoacyl-tRNA synthetase family. Homodimer. It depends on Mg(2+) as a cofactor.

It is found in the cytoplasm. The enzyme catalyses tRNA(Lys) + L-lysine + ATP = L-lysyl-tRNA(Lys) + AMP + diphosphate. The sequence is that of Lysine--tRNA ligase from Prochlorococcus marinus (strain MIT 9301).